A 404-amino-acid chain; its full sequence is Neutral protease 2 homolog AFLA_065450 (404 aa).

The signal sequence occupies residues 1-19; the sequence is MRFISASSLLLALAPTLNA. Residues 20 to 185 constitute a propeptide that is removed on maturation; sequence VPVEVAGSAQ…TQAVKILERR (166 aa). 2 disulfide bridges follow: C191–C263 and C270–C288. Position 313 (H313) interacts with Zn(2+). The active site involves E314. Residues H317 and D328 each contribute to the Zn(2+) site.

The protein belongs to the peptidase M35 family. It depends on Zn(2+) as a cofactor.

The protein resides in the secreted. It catalyses the reaction Preferential cleavage of bonds with hydrophobic residues in P1'. Also 3-Asn-|-Gln-4 and 8-Gly-|-Ser-9 bonds in insulin B chain.. Its function is as follows. Secreted metalloproteinase that allows assimilation of proteinaceous substrates. Shows high activities on basic nuclear substrates such as histone and protamine. This is Neutral protease 2 homolog AFLA_065450 from Aspergillus flavus (strain ATCC 200026 / FGSC A1120 / IAM 13836 / NRRL 3357 / JCM 12722 / SRRC 167).